Here is a 388-residue protein sequence, read N- to C-terminus: S-adenosylmethionine synthase (388 aa).

Position 17 (H17) interacts with ATP. D19 is a Mg(2+) binding site. Position 45 (E45) interacts with K(+). 2 residues coordinate L-methionine: E58 and Q102. The segment at 102–112 (QSVHIAQGVDA) is flexible loop. ATP-binding positions include 167 to 169 (DAK), D241, 247 to 248 (RK), A264, and K268. D241 is a binding site for L-methionine. Residue K272 coordinates L-methionine.

Belongs to the AdoMet synthase family. As to quaternary structure, homotetramer; dimer of dimers. The cofactor is Mg(2+). Requires K(+) as cofactor.

Its subcellular location is the cytoplasm. It carries out the reaction L-methionine + ATP + H2O = S-adenosyl-L-methionine + phosphate + diphosphate. It participates in amino-acid biosynthesis; S-adenosyl-L-methionine biosynthesis; S-adenosyl-L-methionine from L-methionine: step 1/1. Catalyzes the formation of S-adenosylmethionine (AdoMet) from methionine and ATP. The overall synthetic reaction is composed of two sequential steps, AdoMet formation and the subsequent tripolyphosphate hydrolysis which occurs prior to release of AdoMet from the enzyme. This chain is S-adenosylmethionine synthase, found in Maricaulis maris (strain MCS10) (Caulobacter maris).